The chain runs to 168 residues: DAZ-associated protein 2 (168 aa).

The segment covering 1–13 (MNSKGQYPTQPTY) has biased composition (low complexity). The segment at 1–25 (MNSKGQYPTQPTYPVQPPGNPVYPQ) is disordered. Residues 39–42 (PPAY) carry the PPAY motif. At serine 77 the chain carries Phosphoserine.

In terms of assembly, interacts with SOX6. Interacts with DAZ1 and DAZL. Interacts with IL17RB. May interact with FAM168B. Interacts with INCA1. Interacts with EIF4G1 and EIF4G2. Interacts (via PPAY motif) with NEDD4 (via WW domains). Interacts with transcription factor TCF4; the interaction results in localization of DAZAP2 to the nucleus. Interacts with transcription factors TCF7 and TCF7L1. Interacts with transcription factor LEF1. Interacts with serine/threonine-protein kinase HIPK2; the interaction results in phosphorylation of DAZAP2 which causes localization of DAZAP2 to the nucleus, reduces interaction of DAZAP2 with HIPK2 and prevents DAZAP2-dependent degradation of HIPK2. Interacts with ubiquitin ligase SIAH1; the interaction is decreased following phosphorylation of DAZAP2 by HIPK2. Interacts with TP53; the interaction is triggered by DNA damage. Ubiquitinated by SMURF2, leading to proteasomal degradation. Ubiquitinated by NEDD4, leading to proteasomal degradation. In terms of processing, following DNA damage, phosphorylated by HIPK2 which promotes DAZAP2 localization to the nucleus, reduces interaction of DAZAP2 with HIPK2 and SIAH1, and prevents DAZAP2-dependent ubiquitination of HIPK2 by E3 ubiquitin-protein ligase SIAH1 and subsequent HIPK2 proteasomal degradation.

Its subcellular location is the cytoplasm. It is found in the nucleus. The protein resides in the nucleus speckle. It localises to the nuclear body. The protein localises to the stress granule. In terms of biological role, in unstressed cells, promotes SIAH1-mediated polyubiquitination and degradation of the serine/threonine-protein kinase HIPK2, probably by acting as a loading factor that potentiates complex formation between HIPK2 and ubiquitin ligase SIAH1. In response to DNA damage, localizes to the nucleus following phosphorylation by HIPK2 and modulates the expression of a subset of TP53/p53 target genes by binding to TP53 at target gene promoters. This limits the expression of a number of cell death-mediating TP53 target genes, reducing DNA damage-induced cell death. Enhances the binding of transcription factor TCF7L2/TCF4, a Wnt signaling pathway effector, to the promoters of target genes. Plays a role in stress granule formation. The protein is DAZ-associated protein 2 of Bos taurus (Bovine).